The following is a 353-amino-acid chain: Quinolinate synthase (353 aa).

2 residues coordinate iminosuccinate: His-49 and Ser-70. Cys-115 serves as a coordination point for [4Fe-4S] cluster. Residues 141-143 and Ser-158 contribute to the iminosuccinate site; that span reads YAN. [4Fe-4S] cluster is bound at residue Cys-202. Residues 228–230 and Thr-245 each bind iminosuccinate; that span reads HPE. A [4Fe-4S] cluster-binding site is contributed by Cys-299.

The protein belongs to the quinolinate synthase family. Type 1 subfamily. It depends on [4Fe-4S] cluster as a cofactor.

It is found in the cytoplasm. It carries out the reaction iminosuccinate + dihydroxyacetone phosphate = quinolinate + phosphate + 2 H2O + H(+). The protein operates within cofactor biosynthesis; NAD(+) biosynthesis; quinolinate from iminoaspartate: step 1/1. Functionally, catalyzes the condensation of iminoaspartate with dihydroxyacetone phosphate to form quinolinate. The protein is Quinolinate synthase of Hahella chejuensis (strain KCTC 2396).